Consider the following 593-residue polypeptide: Probable metalloprotease ARX1 (593 aa).

It belongs to the peptidase M24 family. In terms of assembly, component of the nucleoplasmic and cytoplasmic pre-60S ribosomal particles. Interacts directly with REI1.

The protein resides in the cytoplasm. It localises to the nucleus. Probable metalloprotease involved in proper assembly of pre-ribosomal particles during the biogenesis of the 60S ribosomal subunit. Accompanies the pre-60S particles to the cytoplasm. The chain is Probable metalloprotease ARX1 (ARX1) from Saccharomyces cerevisiae (strain ATCC 204508 / S288c) (Baker's yeast).